A 316-amino-acid chain; its full sequence is L-lactate dehydrogenase (316 aa).

Residues V15, D37, K42, Y68, and 82–83 each bind NAD(+); that span reads GL. Residues Q85, R91, and 123 to 126 contribute to the substrate site; that span reads NPVD. NAD(+) contacts are provided by residues 121–123 and T146; that span reads ASN. Substrate is bound at residue 151-154; that stretch reads DTSR. Beta-D-fructose 1,6-bisphosphate is bound by residues R156 and H171. H178 functions as the Proton acceptor in the catalytic mechanism. Y222 bears the Phosphotyrosine mark. Substrate is bound at residue T231.

Belongs to the LDH/MDH superfamily. LDH family. As to quaternary structure, homotetramer.

It localises to the cytoplasm. The enzyme catalyses (S)-lactate + NAD(+) = pyruvate + NADH + H(+). The protein operates within fermentation; pyruvate fermentation to lactate; (S)-lactate from pyruvate: step 1/1. Its activity is regulated as follows. Allosterically activated by fructose 1,6-bisphosphate (FBP). Catalyzes the conversion of lactate to pyruvate. This Borrelia hermsii (strain HS1 / DAH) protein is L-lactate dehydrogenase.